We begin with the raw amino-acid sequence, 470 residues long: ATP synthase subunit beta (470 aa).

Position 158-165 (158-165 (GGAGVGKT)) interacts with ATP.

This sequence belongs to the ATPase alpha/beta chains family. As to quaternary structure, F-type ATPases have 2 components, CF(1) - the catalytic core - and CF(0) - the membrane proton channel. CF(1) has five subunits: alpha(3), beta(3), gamma(1), delta(1), epsilon(1). CF(0) has three main subunits: a(1), b(2) and c(9-12). The alpha and beta chains form an alternating ring which encloses part of the gamma chain. CF(1) is attached to CF(0) by a central stalk formed by the gamma and epsilon chains, while a peripheral stalk is formed by the delta and b chains.

The protein resides in the cell membrane. The enzyme catalyses ATP + H2O + 4 H(+)(in) = ADP + phosphate + 5 H(+)(out). Produces ATP from ADP in the presence of a proton gradient across the membrane. The catalytic sites are hosted primarily by the beta subunits. This is ATP synthase subunit beta from Alkalihalophilus pseudofirmus (strain ATCC BAA-2126 / JCM 17055 / OF4) (Bacillus pseudofirmus).